A 212-amino-acid chain; its full sequence is NAD(P)H-hydrate epimerase (212 aa).

One can recognise a YjeF N-terminal domain in the interval 10 to 212 (MRSLERAAIA…IGVIVKPIGL (203 aa)). 65 to 69 (NNGGD) contacts (6S)-NADPHX. Residues asparagine 66 and aspartate 129 each contribute to the K(+) site. (6S)-NADPHX-binding positions include 133–139 (GLGLTRP) and aspartate 161. Serine 164 is a binding site for K(+).

The protein belongs to the NnrE/AIBP family. K(+) is required as a cofactor.

The enzyme catalyses (6R)-NADHX = (6S)-NADHX. It carries out the reaction (6R)-NADPHX = (6S)-NADPHX. Functionally, catalyzes the epimerization of the S- and R-forms of NAD(P)HX, a damaged form of NAD(P)H that is a result of enzymatic or heat-dependent hydration. This is a prerequisite for the S-specific NAD(P)H-hydrate dehydratase to allow the repair of both epimers of NAD(P)HX. This is NAD(P)H-hydrate epimerase from Rhodobacter capsulatus (strain ATCC BAA-309 / NBRC 16581 / SB1003).